Consider the following 372-residue polypeptide: Cyanuric acid amidohydrolase (372 aa).

The segment at 1 to 105 is RU A; sequence MPTTLRRAHV…IVFEAREVDE (105 aa). Residues Arg56 and 84–85 contribute to the substrate site; that span reads SG. An RU B region spans residues 115–252; the sequence is SLALGRARTP…HEIMVAGMSR (138 aa). Residue Lys165 is part of the active site. Residues Arg197 and 235–236 each bind substrate; that span reads SG. Ser235 serves as the catalytic Nucleophile. Residues 258–372 form an RU C region; it reads LAIDHGVMRD…GPVAIIVERT (115 aa). Glu305 serves as a coordination point for Mg(2+). Residues Arg332 and 351–352 each bind substrate; that span reads SG. 5 residues coordinate Mg(2+): Ala354, Gln357, Gly358, Pro359, and Gly362.

It belongs to the cyclic amide hydrolase (CyAH) family. As to quaternary structure, homotetramer.

It carries out the reaction cyanurate + H2O = 1-carboxybiuret + H(+). Its pathway is xenobiotic degradation; atrazine degradation; biuret from cyanurate: step 1/1. With respect to regulation, inhibited by barbituric acid. Functionally, responsible for the hydrolysis of cyanuric acid, an intermediate formed during catabolism of s-triazine based compounds in herbicides such as atrazine and polymers such as melamine. Catalyzes the hydrolytic opening of the s-triazine ring of cyanuric acid (2,4,6-trihydroxy-s-triazine) to yield carbon dioxide and carboxybiuret, which spontaneously decarboxylates to biuret. The protein is Cyanuric acid amidohydrolase of Bradyrhizobium sp. (strain ORS 375).